The primary structure comprises 236 residues: UPF0173 metal-dependent hydrolase Mnod_3315 (236 aa).

The protein belongs to the UPF0173 family.

The chain is UPF0173 metal-dependent hydrolase Mnod_3315 from Methylobacterium nodulans (strain LMG 21967 / CNCM I-2342 / ORS 2060).